Here is a 723-residue protein sequence, read N- to C-terminus: ABC transporter F family member 4 (723 aa).

The disordered stretch occupies residues 1–117 (MGKKKSDESA…KEQKKREAKE (117 aa)). Positions 18–31 (SGKDASKDSKKEKL) are enriched in basic and acidic residues. A compositionally biased stretch (polar residues) spans 50 to 65 (GSSSRTKAAPKSTSYT). The segment covering 72 to 84 (PSDEEDDGESDEE) has biased composition (acidic residues). Residues 95-117 (KSEQRHLEISVTDKEQKKREAKE) are compositionally biased toward basic and acidic residues. One can recognise an ABC transporter 1 domain in the interval 163-423 (ITIESFSVSA…EMNKKFDVYD (261 aa)). ATP is bound at residue 195–202 (GPNGMGKS). Disordered stretches follow at residues 256 to 275 (LQKS…DDDD) and 427 to 472 (KAAK…APEA). The segment covering 266–275 (ENVDGEDDDD) has biased composition (acidic residues). Basic and acidic residues predominate over residues 437–446 (QQEKVKDRAK). An ABC transporter 2 domain is found at 496 to 721 (LQLIEVSFSY…DLQREIKAEV (226 aa)). An ATP-binding site is contributed by 530 to 537 (GPNGAGKS).

Belongs to the ABC transporter superfamily. ABCF family. EF3 (TC 3.A.1.121) subfamily.

This chain is ABC transporter F family member 4 (ABCF4), found in Arabidopsis thaliana (Mouse-ear cress).